The chain runs to 240 residues: Regulatory protein HlyX (240 aa).

An essential for the oxygen-regulated activity region spans residues 15–28; it reads CTIHCQNCSISQLC. The region spanning 163 to 236 is the HTH crp-type domain; it reads MSAEEKLAAF…GKYITINRMD (74 aa). Positions 196–215 form a DNA-binding region, H-T-H motif; that stretch reads RGDIGNYLGLTIETISRLLG.

It localises to the cytoplasm. Confers a hemolytic phenotype on E.coli. May regulate, rather than mediate, hemolytic activity. The polypeptide is Regulatory protein HlyX (hlyX) (Actinobacillus pleuropneumoniae (Haemophilus pleuropneumoniae)).